The chain runs to 98 residues: DNA-binding protein Fis (98 aa).

Residues glutamine 74–lysine 93 constitute a DNA-binding region (H-T-H motif).

This sequence belongs to the transcriptional regulatory Fis family. In terms of assembly, homodimer.

Functionally, activates ribosomal RNA transcription. Plays a direct role in upstream activation of rRNA promoters. The chain is DNA-binding protein Fis from Vibrio parahaemolyticus serotype O3:K6 (strain RIMD 2210633).